Consider the following 95-residue polypeptide: Aspartyl/glutamyl-tRNA(Asn/Gln) amidotransferase subunit C (95 aa).

The protein belongs to the GatC family. In terms of assembly, heterotrimer of A, B and C subunits.

It catalyses the reaction L-glutamyl-tRNA(Gln) + L-glutamine + ATP + H2O = L-glutaminyl-tRNA(Gln) + L-glutamate + ADP + phosphate + H(+). The enzyme catalyses L-aspartyl-tRNA(Asn) + L-glutamine + ATP + H2O = L-asparaginyl-tRNA(Asn) + L-glutamate + ADP + phosphate + 2 H(+). Its function is as follows. Allows the formation of correctly charged Asn-tRNA(Asn) or Gln-tRNA(Gln) through the transamidation of misacylated Asp-tRNA(Asn) or Glu-tRNA(Gln) in organisms which lack either or both of asparaginyl-tRNA or glutaminyl-tRNA synthetases. The reaction takes place in the presence of glutamine and ATP through an activated phospho-Asp-tRNA(Asn) or phospho-Glu-tRNA(Gln). The protein is Aspartyl/glutamyl-tRNA(Asn/Gln) amidotransferase subunit C of Roseobacter denitrificans (strain ATCC 33942 / OCh 114) (Erythrobacter sp. (strain OCh 114)).